The following is a 277-amino-acid chain: Formamidopyrimidine-DNA glycosylase (277 aa).

The active-site Schiff-base intermediate with DNA is the Pro-2. The active-site Proton donor is Glu-3. The Proton donor; for beta-elimination activity role is filled by Lys-59. Residues His-94 and Arg-113 each contribute to the DNA site. The FPG-type zinc-finger motif lies at 241–275; sequence KIHGKKGKQCQSCNTTIIKKKINGRGSYICEKCQI. Arg-265 serves as the catalytic Proton donor; for delta-elimination activity.

This sequence belongs to the FPG family. Monomer. Zn(2+) serves as cofactor.

It carries out the reaction Hydrolysis of DNA containing ring-opened 7-methylguanine residues, releasing 2,6-diamino-4-hydroxy-5-(N-methyl)formamidopyrimidine.. It catalyses the reaction 2'-deoxyribonucleotide-(2'-deoxyribose 5'-phosphate)-2'-deoxyribonucleotide-DNA = a 3'-end 2'-deoxyribonucleotide-(2,3-dehydro-2,3-deoxyribose 5'-phosphate)-DNA + a 5'-end 5'-phospho-2'-deoxyribonucleoside-DNA + H(+). In terms of biological role, involved in base excision repair of DNA damaged by oxidation or by mutagenic agents. Acts as a DNA glycosylase that recognizes and removes damaged bases. Has a preference for oxidized purines, such as 7,8-dihydro-8-oxoguanine (8-oxoG). Has AP (apurinic/apyrimidinic) lyase activity and introduces nicks in the DNA strand. Cleaves the DNA backbone by beta-delta elimination to generate a single-strand break at the site of the removed base with both 3'- and 5'-phosphates. This Mycoplasma pneumoniae (strain ATCC 29342 / M129 / Subtype 1) (Mycoplasmoides pneumoniae) protein is Formamidopyrimidine-DNA glycosylase (mutM).